Here is a 691-residue protein sequence, read N- to C-terminus: Elongation factor G (691 aa).

A tr-type G domain is found at 8–283; that stretch reads KRVRNIGIAA…AVVAYLPAPD (276 aa). GTP is bound by residues 17–24, 81–85, and 135–138; these read AHIDAGKT, DTPGH, and NKMD.

Belongs to the TRAFAC class translation factor GTPase superfamily. Classic translation factor GTPase family. EF-G/EF-2 subfamily.

Its subcellular location is the cytoplasm. Catalyzes the GTP-dependent ribosomal translocation step during translation elongation. During this step, the ribosome changes from the pre-translocational (PRE) to the post-translocational (POST) state as the newly formed A-site-bound peptidyl-tRNA and P-site-bound deacylated tRNA move to the P and E sites, respectively. Catalyzes the coordinated movement of the two tRNA molecules, the mRNA and conformational changes in the ribosome. In Campylobacter lari (strain RM2100 / D67 / ATCC BAA-1060), this protein is Elongation factor G.